The following is an 844-amino-acid chain: MQDISNHTPMIQQYLKIKSQYQDILLFYRMGDFYELFFDDAKKAAELLDITLTARGKSNGESIPMAGVPYHAAEAYIAKIVKKGLSIAICEQTGDPNTSKGPVERQVTRIITPATVSEEAFLDNNQDSILVSIFEKNNKYYLAYTSYTQGKIYLVKTLTSLNELKNTVLKLSPQEIITNSRELAQQNPFKKPIKALEEWYYSNFEAKKYINDSLDTNIANNILNLYKNDKLTTIGSILSYLTNILKDTPRHITDISYEQEQDTLNIDINSRINLELDNNSKSSLLSIIGKCKTSLGSRLLKRYFSNPTRNLNILATRHSIINSLGENQHFLKIQDVLSYISDIERIISRVALGTVKPKDLVALRDSLEQLPILKKLLSEKNTPEITNINNRIHQLDELVTLLDKAIIENPPTTIRDGGVIKEGFDKELDELKSIKDNSYDFLIKFEELQKQKTGISTLKVGYNRVHGYYIELSKQHADKIPTEYVRRQTLKASERYITEELKNFEDKVLSSKEKALAREKLIYDTLLKKVIEYYKQIQETAASIAEIDVLANFAERAIKLKLSQPKFNNLAKLELKEVRHLAIEHNIDEPFIPNDTLLSKDTNTLQIITGPNMGGKSTYMRQVAQLIFLAYIGSFVPASYADICDIDTIYTRIGASDDISSGRSTFMVEMTETAYILNNASAKSLVIMDEIGRGTSTFDGLALAKACAEKFAQIGAFTLFATHYFELTELAKQYPNVCNIHFEAKEYKDNIYFMHKAVTGAAKKSYGIQVAKLAGISQDVLESAKQNLYNLEKKQQLTESTQVQAQFQLEPTTQNPLQQKLDAIDINTITPLEALNILFELKKR.

610-617 (GPNMGGKS) lines the ATP pocket.

The protein belongs to the DNA mismatch repair MutS family.

This protein is involved in the repair of mismatches in DNA. It is possible that it carries out the mismatch recognition step. This protein has a weak ATPase activity. This chain is DNA mismatch repair protein MutS, found in Francisella tularensis subsp. mediasiatica (strain FSC147).